The following is a 287-amino-acid chain: 4-hydroxybenzoate octaprenyltransferase (287 aa).

A run of 9 helical transmembrane segments spans residues 7 to 27 (FISYGYLIRLDKPIGTLLLLW), 30 to 50 (LWALWLASSGVLDLSILLIFV), 94 to 114 (VAVASFLALCAFLLIQPLNAF), 118 to 138 (LSVLALLVAFIYPFTKRFFAM), 142 to 162 (VLGIAFGFGIPMAYAAILDFI), 167 to 187 (WFLFTGNIFWAIAYDTAYAMV), 209 to 229 (VVVIAISYGMLFLSHLWVAQL), 235 to 255 (YFLVGWFAALACAIYHLKLVS), and 266 to 286 (FRHNNWLGGFLFLGIVLGLGV).

It belongs to the UbiA prenyltransferase family. Mg(2+) is required as a cofactor.

It is found in the cell inner membrane. The enzyme catalyses all-trans-octaprenyl diphosphate + 4-hydroxybenzoate = 4-hydroxy-3-(all-trans-octaprenyl)benzoate + diphosphate. It participates in cofactor biosynthesis; ubiquinone biosynthesis. Functionally, catalyzes the prenylation of para-hydroxybenzoate (PHB) with an all-trans polyprenyl group. Mediates the second step in the final reaction sequence of ubiquinone-8 (UQ-8) biosynthesis, which is the condensation of the polyisoprenoid side chain with PHB, generating the first membrane-bound Q intermediate 3-octaprenyl-4-hydroxybenzoate. This is 4-hydroxybenzoate octaprenyltransferase from Polynucleobacter necessarius subsp. necessarius (strain STIR1).